Here is a 428-residue protein sequence, read N- to C-terminus: Putative UPF0496 protein 5 (428 aa).

Basic residues predominate over residues methionine 1–alanine 14. The tract at residues methionine 1 to cysteine 40 is disordered. The segment covering alanine 22–glycine 31 has biased composition (acidic residues). The next 2 helical transmembrane spans lie at isoleucine 229 to alanine 249 and proline 252 to methionine 272.

The protein belongs to the UPF0496 family.

Its subcellular location is the membrane. The sequence is that of Putative UPF0496 protein 5 from Oryza sativa subsp. indica (Rice).